A 501-amino-acid chain; its full sequence is Glycogenin-2 (501 aa).

Residues leucine 42, threonine 44, asparagine 45, tyrosine 48, and arginine 110 each contribute to the UDP site. The UDP-alpha-D-glucose site is built by leucine 42, threonine 44, asparagine 45, tyrosine 48, arginine 110, lysine 119, aspartate 135, alanine 136, aspartate 137, asparagine 166, serine 167, aspartate 193, aspartate 196, and glutamine 197. Residues aspartate 135, alanine 136, and aspartate 137 each coordinate UDP. Residue aspartate 135 participates in Mn(2+) binding. Position 137 (aspartate 137) interacts with Mn(2+). Tyrosine 228 is a glycosylation site (O-linked (Glc...) tyrosine). Positions 245, 248, and 251 each coordinate UDP. Histidine 245 is a binding site for Mn(2+). Residues glycine 248 and lysine 251 each coordinate UDP-alpha-D-glucose. A phosphoserine mark is found at serine 368, serine 399, and serine 459.

In terms of assembly, homodimer, tightly complexed to glycogen synthase. Mn(2+) serves as cofactor. Self-glycosylated by the transfer of glucose residues from UDP-glucose to itself, forming an alpha-1,4-glycan of around 10 residues attached to Tyr-228. Detected in liver (at protein level). Expressed preferentially in liver, heart, and pancreas.

It localises to the cytoplasm. The protein resides in the nucleus. The catalysed reaction is L-tyrosyl-[glycogenin] + UDP-alpha-D-glucose = alpha-D-glucosyl-L-tyrosyl-[glycogenin] + UDP + H(+). It carries out the reaction [1,4-alpha-D-glucosyl](n)-L-tyrosyl-[glycogenin] + UDP-alpha-D-glucose = [1,4-alpha-D-glucosyl](n+1)-L-tyrosyl-[glycogenin] + UDP + H(+). The protein operates within glycan biosynthesis; glycogen biosynthesis. Its function is as follows. Glycogenin participates in the glycogen biosynthetic process along with glycogen synthase and glycogen branching enzyme. It catalyzes the formation of a short alpha (1,4)-glucosyl chain covalently attached via a glucose 1-O-tyrosyl linkage to internal tyrosine residues and these chains act as primers for the elongation reaction catalyzed by glycogen synthase. This chain is Glycogenin-2 (GYG2), found in Homo sapiens (Human).